Reading from the N-terminus, the 161-residue chain is MGQRILGLDPGLAIVGFGALLCPDSRQGSLELLDFGVISTPAGAEIGDRLETIYQDLHQLIDLVQPDAVAVEKLFFYRMGNTIAVAQARGVLMLVLRQRRLPYCEFTPAQVKQALTGYGNAPKLAVQQAVQRELQLDAIPRPDDAADAVALALTAWFQQLA.

Residues aspartate 9, glutamate 72, and aspartate 144 contribute to the active site. Residues aspartate 9, glutamate 72, and aspartate 144 each contribute to the Mg(2+) site.

Belongs to the RuvC family. In terms of assembly, homodimer which binds Holliday junction (HJ) DNA. The HJ becomes 2-fold symmetrical on binding to RuvC with unstacked arms; it has a different conformation from HJ DNA in complex with RuvA. In the full resolvosome a probable DNA-RuvA(4)-RuvB(12)-RuvC(2) complex forms which resolves the HJ. Requires Mg(2+) as cofactor.

It is found in the cytoplasm. It catalyses the reaction Endonucleolytic cleavage at a junction such as a reciprocal single-stranded crossover between two homologous DNA duplexes (Holliday junction).. Its function is as follows. The RuvA-RuvB-RuvC complex processes Holliday junction (HJ) DNA during genetic recombination and DNA repair. Endonuclease that resolves HJ intermediates. Cleaves cruciform DNA by making single-stranded nicks across the HJ at symmetrical positions within the homologous arms, yielding a 5'-phosphate and a 3'-hydroxyl group; requires a central core of homology in the junction. The consensus cleavage sequence is 5'-(A/T)TT(C/G)-3'. Cleavage occurs on the 3'-side of the TT dinucleotide at the point of strand exchange. HJ branch migration catalyzed by RuvA-RuvB allows RuvC to scan DNA until it finds its consensus sequence, where it cleaves and resolves the cruciform DNA. The protein is Crossover junction endodeoxyribonuclease RuvC of Synechococcus sp. (strain ATCC 27144 / PCC 6301 / SAUG 1402/1) (Anacystis nidulans).